The chain runs to 484 residues: Putative cysteine ligase BshC (484 aa).

The stretch at 372 to 435 (RAFRDRVEGL…AARDEVLARH (64 aa)) forms a coiled coil.

This sequence belongs to the BshC family.

This Thermus thermophilus (strain ATCC 27634 / DSM 579 / HB8) protein is Putative cysteine ligase BshC.